The following is a 173-amino-acid chain: Translation initiation factor IF-3 (173 aa).

It belongs to the IF-3 family. Monomer.

The protein localises to the cytoplasm. IF-3 binds to the 30S ribosomal subunit and shifts the equilibrium between 70S ribosomes and their 50S and 30S subunits in favor of the free subunits, thus enhancing the availability of 30S subunits on which protein synthesis initiation begins. This chain is Translation initiation factor IF-3, found in Bacillus subtilis (strain 168).